The chain runs to 190 residues: Small ribosomal subunit protein eS7B (190 aa).

An N-acetylserine modification is found at S2. 2 positions are modified to phosphoserine: S10 and S31. Residues K83 and K84 each participate in a glycyl lysine isopeptide (Lys-Gly) (interchain with G-Cter in ubiquitin) cross-link.

The protein belongs to the eukaryotic ribosomal protein eS7 family. Component of the small ribosomal subunit (SSU). Mature yeast ribosomes consist of a small (40S) and a large (60S) subunit. The 40S small subunit contains 1 molecule of ribosomal RNA (18S rRNA) and 33 different proteins (encoded by 57 genes). The large 60S subunit contains 3 rRNA molecules (25S, 5.8S and 5S rRNA) and 46 different proteins (encoded by 81 genes). Interacts with snoRNA U3. uS11 interacts with MPP10. Component of the ribosomal small subunit (SSU) processome composed of at least 40 protein subunits and snoRNA U3. Post-translationally, N-terminally acetylated by acetyltransferase NatA. In terms of processing, ubiquitinated at Lys-83 and Lys-84 in response to stalled ribosomes, leading to activation of the No-Go Decay (NGD) pathway: first monoubiquitinated by MOT2/NOT4, followed by formation by HEL2 of 'Lys-63'-linked polyubiquitin chains on monoubiquitin.

The protein resides in the cytoplasm. The protein localises to the nucleus. It is found in the nucleolus. Component of the ribosome, a large ribonucleoprotein complex responsible for the synthesis of proteins in the cell. The small ribosomal subunit (SSU) binds messenger RNAs (mRNAs) and translates the encoded message by selecting cognate aminoacyl-transfer RNA (tRNA) molecules. The large subunit (LSU) contains the ribosomal catalytic site termed the peptidyl transferase center (PTC), which catalyzes the formation of peptide bonds, thereby polymerizing the amino acids delivered by tRNAs into a polypeptide chain. The nascent polypeptides leave the ribosome through a tunnel in the LSU and interact with protein factors that function in enzymatic processing, targeting, and the membrane insertion of nascent chains at the exit of the ribosomal tunnel. eS7 is involved in nucleolar processing of pre-18S ribosomal RNA and ribosome assembly. The protein is Small ribosomal subunit protein eS7B of Saccharomyces cerevisiae (strain ATCC 204508 / S288c) (Baker's yeast).